The chain runs to 429 residues: Light-independent protochlorophyllide reductase subunit N (429 aa).

3 residues coordinate [4Fe-4S] cluster: Cys32, Cys57, and Cys118.

The protein belongs to the BchN/ChlN family. As to quaternary structure, protochlorophyllide reductase is composed of three subunits; BchL, BchN and BchB. Forms a heterotetramer of two BchB and two BchN subunits. Requires [4Fe-4S] cluster as cofactor.

It catalyses the reaction chlorophyllide a + oxidized 2[4Fe-4S]-[ferredoxin] + 2 ADP + 2 phosphate = protochlorophyllide a + reduced 2[4Fe-4S]-[ferredoxin] + 2 ATP + 2 H2O. It functions in the pathway porphyrin-containing compound metabolism; bacteriochlorophyll biosynthesis (light-independent). Functionally, component of the dark-operative protochlorophyllide reductase (DPOR) that uses Mg-ATP and reduced ferredoxin to reduce ring D of protochlorophyllide (Pchlide) to form chlorophyllide a (Chlide). This reaction is light-independent. The NB-protein (BchN-BchB) is the catalytic component of the complex. This chain is Light-independent protochlorophyllide reductase subunit N, found in Rhodopseudomonas palustris (strain ATCC BAA-98 / CGA009).